The sequence spans 196 residues: Heat shock protein beta-8 (196 aa).

The segment at 1–28 (MADGQLPFPCSYPSRLRRDPFRDSPLSS) is disordered. Phosphoserine is present on residues serine 24 and serine 57. Threonine 63 is subject to Phosphothreonine. Residues arginine 71 and arginine 78 each carry the asymmetric dimethylarginine modification. Positions 78-185 (RFGVPAEGRS…PFGESSFNNE (108 aa)) constitute a sHSP domain. A Phosphoserine modification is found at serine 87. The disordered stretch occupies residues 176 to 196 (PFGESSFNNELPQDNQEVTCS). Polar residues predominate over residues 178-196 (GESSFNNELPQDNQEVTCS).

The protein belongs to the small heat shock protein (HSP20) family. Monomer. Forms a ternary complex with BAG3 and HSPA1A. Component of the chaperone-assisted selective autophagy (CASA) complex consisting of BAG3, HSPA8/HSC70, HSPB8 and STUB1/CHIP. Interacts with HSPB1. Interacts with DNAJB6. Interacts with BAG3. Highly expressed in skeletal muscle, heart, uterus, liver, lung and ovary. Low levels found in stomach and brain. Not detected in small intestine, large intestine, kidney, spleen and testis. In the ovary, expression is concentrated in the endometrium and in the connective tissue between the circular and longitudinal muscles of the myometrium.

Its subcellular location is the cytoplasm. The protein localises to the nucleus. Involved in the chaperone-assisted selective autophagy (CASA), a crucial process for protein quality control, particularly in mechanical strained cells and tissues such as muscle. Displays temperature-dependent chaperone activity. The sequence is that of Heat shock protein beta-8 (Hspb8) from Mus musculus (Mouse).